The following is a 103-amino-acid chain: Phosphoribosyl-ATP pyrophosphatase (103 aa).

It belongs to the PRA-PH family.

It is found in the cytoplasm. It catalyses the reaction 1-(5-phospho-beta-D-ribosyl)-ATP + H2O = 1-(5-phospho-beta-D-ribosyl)-5'-AMP + diphosphate + H(+). Its pathway is amino-acid biosynthesis; L-histidine biosynthesis; L-histidine from 5-phospho-alpha-D-ribose 1-diphosphate: step 2/9. In Listeria monocytogenes serovar 1/2a (strain ATCC BAA-679 / EGD-e), this protein is Phosphoribosyl-ATP pyrophosphatase (hisE).